A 260-amino-acid chain; its full sequence is Adenosylcobinamide-GDP ribazoletransferase (260 aa).

The next 7 membrane-spanning stretches (helical) occupy residues 42–62 (TWAL…VYKI), 68–88 (LTPN…TGAL), 118–137 (IGTY…WSAL), 144–166 (WLVT…AFMS), 180–200 (AGAP…LVLT), 201–221 (LALG…AGLI), and 237–257 (ILGA…AAFQ).

This sequence belongs to the CobS family. It depends on Mg(2+) as a cofactor.

It localises to the cell inner membrane. The catalysed reaction is alpha-ribazole + adenosylcob(III)inamide-GDP = adenosylcob(III)alamin + GMP + H(+). It catalyses the reaction alpha-ribazole 5'-phosphate + adenosylcob(III)inamide-GDP = adenosylcob(III)alamin 5'-phosphate + GMP + H(+). It functions in the pathway cofactor biosynthesis; adenosylcobalamin biosynthesis; adenosylcobalamin from cob(II)yrinate a,c-diamide: step 7/7. Its function is as follows. Joins adenosylcobinamide-GDP and alpha-ribazole to generate adenosylcobalamin (Ado-cobalamin). Also synthesizes adenosylcobalamin 5'-phosphate from adenosylcobinamide-GDP and alpha-ribazole 5'-phosphate. This is Adenosylcobinamide-GDP ribazoletransferase from Bradyrhizobium diazoefficiens (strain JCM 10833 / BCRC 13528 / IAM 13628 / NBRC 14792 / USDA 110).